A 604-amino-acid chain; its full sequence is Beta-(1--&gt;2)glucan export ATP-binding/permease protein NdvA (604 aa).

One can recognise an ABC transmembrane type-1 domain in the interval 21-311 (GWILAFANLL…VVSFINSVFM (291 aa)). The next 6 helical transmembrane spans lie at 22-42 (WILA…PVLF), 68-88 (LLGA…AVAL), 146-166 (EHFA…YINW), 168-188 (LAIL…LVVH), 238-258 (LLAL…ITRA), and 285-305 (IVMF…VVSF). An ABC transporter domain is found at 345–579 (VEFKDVSFSY…QGHFAALARA (235 aa)). An ATP-binding site is contributed by 378–385 (GATGAGKS).

The protein belongs to the ABC transporter superfamily. Beta-(1--&gt;2)glucan exporter (TC 3.A.1.108.1) family. As to quaternary structure, homodimer.

The protein resides in the cell inner membrane. The enzyme catalyses [(1-&gt;2)-beta-D-glucosyl](n)(in) + ATP + H2O = [(1-&gt;2)-beta-D-glucosyl](n)(out) + ADP + phosphate + H(+). Functionally, involved in beta-(1--&gt;2)glucan export. Transmembrane domains (TMD) form a pore in the inner membrane and the ATP-binding domain (NBD) is responsible for energy generation. This Rhodopseudomonas palustris (strain BisB18) protein is Beta-(1--&gt;2)glucan export ATP-binding/permease protein NdvA.